We begin with the raw amino-acid sequence, 494 residues long: Glutamyl-tRNA(Gln) amidotransferase subunit A (494 aa).

Residues K88 and S163 each act as charge relay system in the active site. The active-site Acyl-ester intermediate is the S187.

It belongs to the amidase family. GatA subfamily. As to quaternary structure, heterotrimer of A, B and C subunits.

It catalyses the reaction L-glutamyl-tRNA(Gln) + L-glutamine + ATP + H2O = L-glutaminyl-tRNA(Gln) + L-glutamate + ADP + phosphate + H(+). Functionally, allows the formation of correctly charged Gln-tRNA(Gln) through the transamidation of misacylated Glu-tRNA(Gln) in organisms which lack glutaminyl-tRNA synthetase. The reaction takes place in the presence of glutamine and ATP through an activated gamma-phospho-Glu-tRNA(Gln). The polypeptide is Glutamyl-tRNA(Gln) amidotransferase subunit A (Corynebacterium diphtheriae (strain ATCC 700971 / NCTC 13129 / Biotype gravis)).